Reading from the N-terminus, the 312-residue chain is Urease accessory protein UreD (312 aa).

Over residues 1–15 (MLAEQFTDKNKHAEQ) the composition is skewed to basic and acidic residues. The segment at 1 to 24 (MLAEQFTDKNKHAEQELSPGSSAV) is disordered.

This sequence belongs to the UreD family. As to quaternary structure, ureD, UreF and UreG form a complex that acts as a GTP-hydrolysis-dependent molecular chaperone, activating the urease apoprotein by helping to assemble the nickel containing metallocenter of UreC. The UreE protein probably delivers the nickel.

Its subcellular location is the cytoplasm. In terms of biological role, required for maturation of urease via the functional incorporation of the urease nickel metallocenter. The chain is Urease accessory protein UreD from Hahella chejuensis (strain KCTC 2396).